A 347-amino-acid chain; its full sequence is D-alanine--D-alanine ligase (347 aa).

An ATP-grasp domain is found at 134-332 (KLYAKDLGVK…LAQSLPKTPK (199 aa)). 161–216 (LIKFNFPFIVKPSNAGSSLGVNVVKEEKELVYALDSAFEYSKEVLIEPFIQGVKEY) is a binding site for ATP. Mg(2+)-binding residues include D288, E300, and N302.

Belongs to the D-alanine--D-alanine ligase family. It depends on Mg(2+) as a cofactor. The cofactor is Mn(2+).

Its subcellular location is the cytoplasm. It carries out the reaction 2 D-alanine + ATP = D-alanyl-D-alanine + ADP + phosphate + H(+). It functions in the pathway cell wall biogenesis; peptidoglycan biosynthesis. Cell wall formation. The chain is D-alanine--D-alanine ligase from Helicobacter pylori (strain P12).